The sequence spans 835 residues: Leucine--tRNA ligase (835 aa).

A 'HIGH' region motif is present at residues 36–46 (PYPSGKIHVGH). Positions 602 to 606 (KMSKS) match the 'KMSKS' region motif. Lysine 605 is a binding site for ATP.

Belongs to the class-I aminoacyl-tRNA synthetase family.

The protein resides in the cytoplasm. It carries out the reaction tRNA(Leu) + L-leucine + ATP = L-leucyl-tRNA(Leu) + AMP + diphosphate. In Rickettsia felis (strain ATCC VR-1525 / URRWXCal2) (Rickettsia azadi), this protein is Leucine--tRNA ligase.